The following is a 191-amino-acid chain: Elongation factor P (191 aa).

Position 34 is an N6-(3,6-diaminohexanoyl)-5-hydroxylysine (Lys34).

Belongs to the elongation factor P family. Post-translationally, may be beta-lysylated on the epsilon-amino group of Lys-34 by the combined action of EpmA and EpmB, and then hydroxylated on the C5 position of the same residue by EpmC (if this protein is present). Lysylation is critical for the stimulatory effect of EF-P on peptide-bond formation. The lysylation moiety may extend toward the peptidyltransferase center and stabilize the terminal 3-CCA end of the tRNA. Hydroxylation of the C5 position on Lys-34 may allow additional potential stabilizing hydrogen-bond interactions with the P-tRNA.

It localises to the cytoplasm. Its pathway is protein biosynthesis; polypeptide chain elongation. Functionally, involved in peptide bond synthesis. Alleviates ribosome stalling that occurs when 3 or more consecutive Pro residues or the sequence PPG is present in a protein, possibly by augmenting the peptidyl transferase activity of the ribosome. Modification of Lys-34 is required for alleviation. This Marinomonas sp. (strain MWYL1) protein is Elongation factor P.